A 745-amino-acid chain; its full sequence is Copper-transporting ATPase (745 aa).

One can recognise an HMA domain in the interval 1–67 (MKESFYIEGM…LIEKLGYSPK (67 aa)). The Cytoplasmic portion of the chain corresponds to 1–83 (MKESFYIEGM…KKEFFSPNVK (83 aa)). Residues Cys12 and Cys15 each contribute to the Cu cation site. Residues 84-104 (LALAVIFTLFVVYLSMGAMLS) form a helical membrane-spanning segment. Residues 105–124 (PSLLPESLLAIDNHSNFLNA) lie on the Extracellular side of the membrane. The chain crosses the membrane as a helical span at residues 125–144 (CLQLIGALIVMHLGRDFYIQ). The Cytoplasmic segment spans residues 145-151 (GFKALWH). Residues 152 to 172 (RQPNMSSLIAIGTSAALISSL) form a helical membrane-spanning segment. At 173 to 194 (WQLYLVYTNHYTDQWSYGHYYF) the chain is on the extracellular side. Residues 195–215 (ESVCVILMFVMVGKRIENVSK) traverse the membrane as a helical segment. Over 216–343 (DKALDAMQAL…KAEISRLADK (128 aa)) the chain is Cytoplasmic. Residues 344 to 366 (VSSVFVPSVIAISILAFVVWLII) form a helical membrane-spanning segment. Residues 367-379 (APKPDFWWNFGIA) lie on the Extracellular side of the membrane. The helical transmembrane segment at 380 to 397 (LEVFVSVLVISCPCALGL) threads the bilayer. Topologically, residues 398 to 685 (ATPMSILVAN…KLSQATIKNI (288 aa)) are cytoplasmic. Asp435 serves as the catalytic 4-aspartylphosphate intermediate. Residues Asp631 and Asp635 each contribute to the Mg(2+) site. A helical transmembrane segment spans residues 686–705 (KENLFWAFCYNSVFIPLACG). Residues 706–716 (VLYKANLMLSP) are Extracellular-facing. Residues 717–735 (AIAGLAMSLSSVSVVLNSQ) form a helical membrane-spanning segment. Residues 736-745 (RLRNFKIKDH) are Cytoplasmic-facing.

This sequence belongs to the cation transport ATPase (P-type) (TC 3.A.3) family. Type IB subfamily.

It is found in the cell membrane. It catalyses the reaction Cu(2+)(in) + ATP + H2O = Cu(2+)(out) + ADP + phosphate + H(+). Its function is as follows. Probably involved in copper export. In Helicobacter pylori (strain ATCC 700392 / 26695) (Campylobacter pylori), this protein is Copper-transporting ATPase (copA).